The following is a 101-amino-acid chain: Venom protein 214 (101 aa).

The first 16 residues, 1-16 (MIRYVLVIITCFLVAA), serve as a signal peptide directing secretion.

In terms of processing, contains 3 disulfide bonds. In terms of tissue distribution, expressed by the venom gland.

It localises to the secreted. The sequence is that of Venom protein 214 from Lychas mucronatus (Chinese swimming scorpion).